A 187-amino-acid polypeptide reads, in one-letter code: GTP cyclohydrolase 1 (187 aa).

Residues C76, H79, and C148 each coordinate Zn(2+).

Belongs to the GTP cyclohydrolase I family. In terms of assembly, toroid-shaped homodecamer, composed of two pentamers of five dimers.

It catalyses the reaction GTP + H2O = 7,8-dihydroneopterin 3'-triphosphate + formate + H(+). Its pathway is cofactor biosynthesis; 7,8-dihydroneopterin triphosphate biosynthesis; 7,8-dihydroneopterin triphosphate from GTP: step 1/1. The sequence is that of GTP cyclohydrolase 1 from Streptococcus agalactiae serotype III (strain NEM316).